Consider the following 342-residue polypeptide: Trans-3-hydroxy-L-proline dehydratase (342 aa).

Ser90 serves as the catalytic Proton acceptor. Residues Gly91 to Ser92, Asp251, and Gly256 to Thr257 each bind substrate.

It belongs to the proline racemase family.

It carries out the reaction trans-3-hydroxy-L-proline = 1-pyrroline-2-carboxylate + H2O. Functionally, catalyzes the dehydration of trans-3-hydroxy-L-proline (t3LHyp) to Delta(1)-pyrroline-2-carboxylate (Pyr2C). Is likely involved in a degradation pathway that converts t3LHyp to L-proline, which would allow P.denitrificans to grow on t3LHyp as a sole carbon source. Displays neither proline racemase activity nor 4-hydroxyproline 2-epimerase activity. The chain is Trans-3-hydroxy-L-proline dehydratase from Paracoccus denitrificans (strain Pd 1222).